The sequence spans 471 residues: Ubiquitin carboxyl-terminal hydrolase calypso (471 aa).

The UCH catalytic domain maps to 45–276 (GWLELESDPG…IRFNLMAVVP (232 aa)). The active-site Nucleophile is cysteine 131. The active-site Proton donor is histidine 213. Coiled coils occupy residues 240-256 (WEDS…VMAE) and 298-324 (GTLQ…DTPT). Residues 307–326 (DEQGESGNGDSQRPDTPTTL) are disordered. Polar residues predominate over residues 314-326 (NGDSQRPDTPTTL). The region spanning 375 to 403 (NYDKFICTFLSMLAHQGVLGELVSQHLLP) is the ULD domain. The interval 405-471 (KKVSGQGAAN…KGRNKCRKRK (67 aa)) is positively charged C-terminal tail required for binding nucleosomes. The segment at 412-471 (AANRISKQSTTASAGGSTAAGTASTPKTQQQQAAAAKNGKSPSKTPGRRRKGRNKCRKRK) is disordered. Residues 420–447 (STTASAGGSTAAGTASTPKTQQQQAAAA) show a composition bias toward low complexity. Basic residues predominate over residues 457–471 (PGRRRKGRNKCRKRK).

The protein belongs to the peptidase C12 family. BAP1 subfamily. As to quaternary structure, catalytic component of the polycomb repressive deubiquitinase (PR-DUB) complex, at least composed of caly/calypso, Asx and sba (MBD5/6 homolog). The PR-DUB complex associates with nucleosomes to mediate deubiquitination of histone H2AK118ub1 substrates; the association requires the positively charged C-terminal tail of caly, probably due to direct binding of DNA. Interacts (via ULD domain) with Asx (via DEUBAD domain); the interaction produces a stable heterodimer with a composite binding site for ubiquitin. Homodimerizes (via coiled-coil hinge-region between the UCH and ULD domains) to mediate assembly of 2 copies of the caly-Asx heterodimer into a bisymmetric tetramer; dimerization enhances PR-DUB association with nucleosomes.

It localises to the nucleus. It carries out the reaction Thiol-dependent hydrolysis of ester, thioester, amide, peptide and isopeptide bonds formed by the C-terminal Gly of ubiquitin (a 76-residue protein attached to proteins as an intracellular targeting signal).. Functionally, catalytic component of the polycomb repressive deubiquitinase (PR-DUB) complex, a complex that specifically mediates deubiquitination of histone H2A monoubiquitinated at 'Lys-119' (H2AK118ub1). Mediates bisymmetric organization of the PR-DUB complex and is involved in association with nucleosomes to mediate deubiquitination. Does not deubiquitinate monoubiquitinated histone H2B. Required to maintain the transcriptionally repressive state of homeotic genes throughout development. The PR-DUB complex has weak or no activity toward 'Lys-48'- and 'Lys-63'-linked polyubiquitin chains. Polycomb group (PcG) protein. The protein is Ubiquitin carboxyl-terminal hydrolase calypso of Drosophila melanogaster (Fruit fly).